Consider the following 92-residue polypeptide: Signal recognition particle 19 kDa protein (92 aa).

It belongs to the SRP19 family. In terms of assembly, part of the signal recognition particle protein translocation system, which is composed of SRP and FtsY. Archaeal SRP consists of a 7S RNA molecule of 300 nucleotides and two protein subunits: SRP54 and SRP19.

It is found in the cytoplasm. In terms of biological role, involved in targeting and insertion of nascent membrane proteins into the cytoplasmic membrane. Binds directly to 7S RNA and mediates binding of the 54 kDa subunit of the SRP. The sequence is that of Signal recognition particle 19 kDa protein from Haloferax volcanii (strain ATCC 29605 / DSM 3757 / JCM 8879 / NBRC 14742 / NCIMB 2012 / VKM B-1768 / DS2) (Halobacterium volcanii).